Reading from the N-terminus, the 102-residue chain is Large ribosomal subunit protein bL21 (102 aa).

This sequence belongs to the bacterial ribosomal protein bL21 family. As to quaternary structure, part of the 50S ribosomal subunit. Contacts protein L20.

In terms of biological role, this protein binds to 23S rRNA in the presence of protein L20. The chain is Large ribosomal subunit protein bL21 from Geotalea uraniireducens (strain Rf4) (Geobacter uraniireducens).